Reading from the N-terminus, the 298-residue chain is 4-diphosphocytidyl-2-C-methyl-D-erythritol kinase (298 aa).

Residue Lys11 is part of the active site. Position 94–104 (94–104 (PMGGGLGGGSS)) interacts with ATP. Asp136 is a catalytic residue.

It belongs to the GHMP kinase family. IspE subfamily.

The catalysed reaction is 4-CDP-2-C-methyl-D-erythritol + ATP = 4-CDP-2-C-methyl-D-erythritol 2-phosphate + ADP + H(+). It functions in the pathway isoprenoid biosynthesis; isopentenyl diphosphate biosynthesis via DXP pathway; isopentenyl diphosphate from 1-deoxy-D-xylulose 5-phosphate: step 3/6. Functionally, catalyzes the phosphorylation of the position 2 hydroxy group of 4-diphosphocytidyl-2C-methyl-D-erythritol. This Chromohalobacter salexigens (strain ATCC BAA-138 / DSM 3043 / CIP 106854 / NCIMB 13768 / 1H11) protein is 4-diphosphocytidyl-2-C-methyl-D-erythritol kinase.